Consider the following 205-residue polypeptide: Large ribosomal subunit protein uL3 (205 aa).

This sequence belongs to the universal ribosomal protein uL3 family. In terms of assembly, part of the 50S ribosomal subunit. Forms a cluster with proteins L14 and L19.

In terms of biological role, one of the primary rRNA binding proteins, it binds directly near the 3'-end of the 23S rRNA, where it nucleates assembly of the 50S subunit. The chain is Large ribosomal subunit protein uL3 from Bacteroides thetaiotaomicron (strain ATCC 29148 / DSM 2079 / JCM 5827 / CCUG 10774 / NCTC 10582 / VPI-5482 / E50).